The following is a 240-amino-acid chain: UDP-2,3-diacylglucosamine hydrolase (240 aa).

Mn(2+)-binding residues include aspartate 8, histidine 10, aspartate 41, asparagine 79, and histidine 114. Position 79–80 (79–80 (NR)) interacts with substrate. Aspartate 122, serine 160, asparagine 164, lysine 167, and histidine 195 together coordinate substrate. Positions 195 and 197 each coordinate Mn(2+).

Belongs to the LpxH family. Mn(2+) serves as cofactor.

Its subcellular location is the cell inner membrane. It catalyses the reaction UDP-2-N,3-O-bis[(3R)-3-hydroxytetradecanoyl]-alpha-D-glucosamine + H2O = 2-N,3-O-bis[(3R)-3-hydroxytetradecanoyl]-alpha-D-glucosaminyl 1-phosphate + UMP + 2 H(+). It participates in glycolipid biosynthesis; lipid IV(A) biosynthesis; lipid IV(A) from (3R)-3-hydroxytetradecanoyl-[acyl-carrier-protein] and UDP-N-acetyl-alpha-D-glucosamine: step 4/6. In terms of biological role, hydrolyzes the pyrophosphate bond of UDP-2,3-diacylglucosamine to yield 2,3-diacylglucosamine 1-phosphate (lipid X) and UMP by catalyzing the attack of water at the alpha-P atom. Involved in the biosynthesis of lipid A, a phosphorylated glycolipid that anchors the lipopolysaccharide to the outer membrane of the cell. In Escherichia coli (strain SE11), this protein is UDP-2,3-diacylglucosamine hydrolase.